The chain runs to 207 residues: Uracil phosphoribosyltransferase (207 aa).

5-phospho-alpha-D-ribose 1-diphosphate is bound by residues Arg77, Arg102, and 129–137; that span reads DPMLATGGS. Uracil-binding positions include Ile192 and 197–199; that span reads GDA. 5-phospho-alpha-D-ribose 1-diphosphate is bound at residue Asp198.

The protein belongs to the UPRTase family. Requires Mg(2+) as cofactor.

The catalysed reaction is UMP + diphosphate = 5-phospho-alpha-D-ribose 1-diphosphate + uracil. The protein operates within pyrimidine metabolism; UMP biosynthesis via salvage pathway; UMP from uracil: step 1/1. Allosterically activated by GTP. Catalyzes the conversion of uracil and 5-phospho-alpha-D-ribose 1-diphosphate (PRPP) to UMP and diphosphate. The chain is Uracil phosphoribosyltransferase from Ureaplasma parvum serovar 3 (strain ATCC 27815 / 27 / NCTC 11736).